The chain runs to 249 residues: Uridylate kinase (249 aa).

Position 16 to 19 (16 to 19 (KLSG)) interacts with ATP. G57 is a UMP binding site. Residues G58 and R62 each contribute to the ATP site. Residues D77 and 138–145 (AGMPYFST) each bind UMP. 3 residues coordinate ATP: N166, Y172, and D175.

It belongs to the UMP kinase family. Homohexamer.

It is found in the cytoplasm. It carries out the reaction UMP + ATP = UDP + ADP. The protein operates within pyrimidine metabolism; CTP biosynthesis via de novo pathway; UDP from UMP (UMPK route): step 1/1. Its activity is regulated as follows. Inhibited by UTP. Its function is as follows. Catalyzes the reversible phosphorylation of UMP to UDP. This Bifidobacterium adolescentis (strain ATCC 15703 / DSM 20083 / NCTC 11814 / E194a) protein is Uridylate kinase.